We begin with the raw amino-acid sequence, 57 residues long: Peptide BmKa1 (57 aa).

Residues 1-22 (MKPRVFFLLFLLVAAMIETGES) form the signal peptide. 2 stretches are compositionally biased toward acidic residues: residues 20 to 29 (GESEENEEGS) and 45 to 57 (VDNEDSDIDGDSD). The disordered stretch occupies residues 20-57 (GESEENEEGSNESGKSTEAKNTDASVDNEDSDIDGDSD).

Belongs to the non-disulfide-bridged peptide (NDBP) superfamily. Expressed by the venom gland.

Its subcellular location is the secreted. The polypeptide is Peptide BmKa1 (Olivierus martensii (Manchurian scorpion)).